We begin with the raw amino-acid sequence, 103 residues long: Small ribosomal subunit protein uS10 (103 aa).

The protein belongs to the universal ribosomal protein uS10 family. In terms of assembly, part of the 30S ribosomal subunit.

Its function is as follows. Involved in the binding of tRNA to the ribosomes. This Shewanella amazonensis (strain ATCC BAA-1098 / SB2B) protein is Small ribosomal subunit protein uS10.